Consider the following 228-residue polypeptide: uncharacterized protein (228 aa).

The next 5 membrane-spanning stretches (helical) occupy residues His-14 to Ala-34, Val-42 to Leu-62, Phe-130 to Ser-150, Phe-156 to Met-176, and Ile-192 to Leu-212.

The protein belongs to the AzlC family.

The protein localises to the cell membrane. This is an uncharacterized protein from Helicobacter pylori (strain J99 / ATCC 700824) (Campylobacter pylori J99).